We begin with the raw amino-acid sequence, 150 residues long: Protein Turandot X (150 aa).

Positions 1-22 (MGLHIGSLLICVFLGILPFATA) are cleaved as a signal peptide. Residues 127-150 (REEGQSNHANSPTTLPSRIQKMTK) are disordered. Over residues 132 to 150 (SNHANSPTTLPSRIQKMTK) the composition is skewed to polar residues.

This sequence belongs to the Turandot family.

The protein localises to the secreted. In terms of biological role, a humoral factor that may play a role in stress tolerance. The polypeptide is Protein Turandot X (Drosophila simulans (Fruit fly)).